A 279-amino-acid polypeptide reads, in one-letter code: Phosphatidylglycerol--prolipoprotein diacylglyceryl transferase (279 aa).

A run of 3 helical transmembrane segments spans residues 22–42, 52–72, and 89–109; these read WYGI…QAAL, LIDI…IYFV, and IWHG…SGII. R137 provides a ligand contact to a 1,2-diacyl-sn-glycero-3-phospho-(1'-sn-glycerol). Transmembrane regions (helical) follow at residues 203-223 and 235-255; these read LGET…FVEA and IRVA…FVIY.

It belongs to the Lgt family.

It is found in the cell membrane. It carries out the reaction L-cysteinyl-[prolipoprotein] + a 1,2-diacyl-sn-glycero-3-phospho-(1'-sn-glycerol) = an S-1,2-diacyl-sn-glyceryl-L-cysteinyl-[prolipoprotein] + sn-glycerol 1-phosphate + H(+). The protein operates within protein modification; lipoprotein biosynthesis (diacylglyceryl transfer). Functionally, catalyzes the transfer of the diacylglyceryl group from phosphatidylglycerol to the sulfhydryl group of the N-terminal cysteine of a prolipoprotein, the first step in the formation of mature lipoproteins. The sequence is that of Phosphatidylglycerol--prolipoprotein diacylglyceryl transferase from Staphylococcus epidermidis (strain ATCC 12228 / FDA PCI 1200).